Here is a 139-residue protein sequence, read N- to C-terminus: MHEWALADAIVRTVLDYAQKEGASRVKAVKVVLGELQDVGEDIVKFAMEELFRGTIAEGAEIIFEEEEAVFKCRNCGHVWKLKEVKDKLDERIREDIHFIPEVVHAFLSCPKCGSHDFEVVKGRGVYISGIMIEKEGEE.

H2 is a Ni(2+) binding site. Zn(2+)-binding residues include C73, C76, C110, and C113.

It belongs to the HypA/HybF family.

Functionally, involved in the maturation of [NiFe] hydrogenases. Required for nickel insertion into the metal center of the hydrogenase. The polypeptide is Hydrogenase maturation factor HypA (Pyrococcus furiosus (strain ATCC 43587 / DSM 3638 / JCM 8422 / Vc1)).